A 528-amino-acid polypeptide reads, in one-letter code: Glutamate--cysteine ligase (528 aa).

Belongs to the glutamate--cysteine ligase type 1 family. Type 1 subfamily.

It catalyses the reaction L-cysteine + L-glutamate + ATP = gamma-L-glutamyl-L-cysteine + ADP + phosphate + H(+). It functions in the pathway sulfur metabolism; glutathione biosynthesis; glutathione from L-cysteine and L-glutamate: step 1/2. The sequence is that of Glutamate--cysteine ligase from Janthinobacterium sp. (strain Marseille) (Minibacterium massiliensis).